The following is a 172-amino-acid chain: uncharacterized protein (172 aa).

A disordered region spans residues 22–64; the sequence is RSVSSSPAAKQPAPGTVAQSFPPGELALRDETGGRGRGTRGIR.

This is an uncharacterized protein from Human cytomegalovirus (strain AD169) (HHV-5).